A 235-amino-acid chain; its full sequence is Elongation factor Tu, chloroplastic (235 aa).

A tr-type G domain is found at 1 to 125; the sequence is KNMITGAAQM…EVDNYIPLPT (125 aa). Residue 47 to 50 coordinates GTP; sequence NKAD.

Belongs to the TRAFAC class translation factor GTPase superfamily. Classic translation factor GTPase family. EF-Tu/EF-1A subfamily.

The protein localises to the plastid. It is found in the chloroplast. It carries out the reaction GTP + H2O = GDP + phosphate + H(+). GTP hydrolase that promotes the GTP-dependent binding of aminoacyl-tRNA to the A-site of ribosomes during protein biosynthesis. This chain is Elongation factor Tu, chloroplastic (tufA), found in Bryopsis plumosa (Green alga).